Reading from the N-terminus, the 449-residue chain is 23S rRNA (uracil(1939)-C(5))-methyltransferase RlmD (449 aa).

The TRAM domain occupies 12–70; sequence SKQLSAKQSFSVHQLDHLGAGIAQHQGKVVFIPGALPSETVQAQLTEQKKNYARAKLIK. Residues cysteine 83, cysteine 89, cysteine 92, and cysteine 170 each contribute to the [4Fe-4S] cluster site. S-adenosyl-L-methionine-binding residues include glutamine 282, phenylalanine 311, asparagine 316, glutamate 332, aspartate 359, and aspartate 379. Cysteine 405 acts as the Nucleophile in catalysis.

The protein belongs to the class I-like SAM-binding methyltransferase superfamily. RNA M5U methyltransferase family. RlmD subfamily.

The catalysed reaction is uridine(1939) in 23S rRNA + S-adenosyl-L-methionine = 5-methyluridine(1939) in 23S rRNA + S-adenosyl-L-homocysteine + H(+). Functionally, catalyzes the formation of 5-methyl-uridine at position 1939 (m5U1939) in 23S rRNA. The chain is 23S rRNA (uracil(1939)-C(5))-methyltransferase RlmD from Shewanella sp. (strain MR-7).